The following is a 324-amino-acid chain: tRNA dimethylallyltransferase (324 aa).

17–24 (GPTASGKT) contacts ATP. A substrate-binding site is contributed by 19-24 (TASGKT). Interaction with substrate tRNA regions lie at residues 42-45 (DSAL), 166-170 (QRIQR), and 251-256 (RCVGYR).

Belongs to the IPP transferase family. Monomer. Mg(2+) is required as a cofactor.

It catalyses the reaction adenosine(37) in tRNA + dimethylallyl diphosphate = N(6)-dimethylallyladenosine(37) in tRNA + diphosphate. Functionally, catalyzes the transfer of a dimethylallyl group onto the adenine at position 37 in tRNAs that read codons beginning with uridine, leading to the formation of N6-(dimethylallyl)adenosine (i(6)A). The polypeptide is tRNA dimethylallyltransferase (Burkholderia pseudomallei (strain 1106a)).